The following is a 163-amino-acid chain: 6,7-dimethyl-8-ribityllumazine synthase (163 aa).

Residues phenylalanine 27, 58-60 (ALE), and 87-89 (CVI) each bind 5-amino-6-(D-ribitylamino)uracil. 92–93 (DT) serves as a coordination point for (2S)-2-hydroxy-3-oxobutyl phosphate. Histidine 95 (proton donor) is an active-site residue. Asparagine 120 contacts 5-amino-6-(D-ribitylamino)uracil. Arginine 134 provides a ligand contact to (2S)-2-hydroxy-3-oxobutyl phosphate.

It belongs to the DMRL synthase family.

The enzyme catalyses (2S)-2-hydroxy-3-oxobutyl phosphate + 5-amino-6-(D-ribitylamino)uracil = 6,7-dimethyl-8-(1-D-ribityl)lumazine + phosphate + 2 H2O + H(+). It functions in the pathway cofactor biosynthesis; riboflavin biosynthesis; riboflavin from 2-hydroxy-3-oxobutyl phosphate and 5-amino-6-(D-ribitylamino)uracil: step 1/2. Catalyzes the formation of 6,7-dimethyl-8-ribityllumazine by condensation of 5-amino-6-(D-ribitylamino)uracil with 3,4-dihydroxy-2-butanone 4-phosphate. This is the penultimate step in the biosynthesis of riboflavin. The protein is 6,7-dimethyl-8-ribityllumazine synthase of Afipia carboxidovorans (strain ATCC 49405 / DSM 1227 / KCTC 32145 / OM5) (Oligotropha carboxidovorans).